The sequence spans 377 residues: Ribosomal RNA large subunit methyltransferase G (377 aa).

The protein belongs to the methyltransferase superfamily. RlmG family.

It is found in the cytoplasm. It catalyses the reaction guanosine(1835) in 23S rRNA + S-adenosyl-L-methionine = N(2)-methylguanosine(1835) in 23S rRNA + S-adenosyl-L-homocysteine + H(+). Specifically methylates the guanine in position 1835 (m2G1835) of 23S rRNA. This chain is Ribosomal RNA large subunit methyltransferase G, found in Aeromonas salmonicida (strain A449).